Reading from the N-terminus, the 213-residue chain is GTP cyclohydrolase 1 (213 aa).

Residues Cys104, His107, and Cys175 each coordinate Zn(2+).

Belongs to the GTP cyclohydrolase I family. Toroid-shaped homodecamer, composed of two pentamers of five dimers.

The enzyme catalyses GTP + H2O = 7,8-dihydroneopterin 3'-triphosphate + formate + H(+). The protein operates within cofactor biosynthesis; 7,8-dihydroneopterin triphosphate biosynthesis; 7,8-dihydroneopterin triphosphate from GTP: step 1/1. In Brucella abortus (strain 2308), this protein is GTP cyclohydrolase 1.